The following is a 399-amino-acid chain: Dual-specificity RNA methyltransferase RlmN (399 aa).

The active-site Proton acceptor is Glu122. Residues 128–371 (ETDRGTLCVS…VRTPRGRDIL (244 aa)) enclose the Radical SAM core domain. A disulfide bridge links Cys135 with Cys374. 3 residues coordinate [4Fe-4S] cluster: Cys142, Cys146, and Cys149. S-adenosyl-L-methionine is bound by residues 200–201 (GE), Ser232, 254–256 (SLH), and Asn331. Cys374 functions as the S-methylcysteine intermediate in the catalytic mechanism.

Belongs to the radical SAM superfamily. RlmN family. It depends on [4Fe-4S] cluster as a cofactor.

It localises to the cytoplasm. The enzyme catalyses adenosine(2503) in 23S rRNA + 2 reduced [2Fe-2S]-[ferredoxin] + 2 S-adenosyl-L-methionine = 2-methyladenosine(2503) in 23S rRNA + 5'-deoxyadenosine + L-methionine + 2 oxidized [2Fe-2S]-[ferredoxin] + S-adenosyl-L-homocysteine. It catalyses the reaction adenosine(37) in tRNA + 2 reduced [2Fe-2S]-[ferredoxin] + 2 S-adenosyl-L-methionine = 2-methyladenosine(37) in tRNA + 5'-deoxyadenosine + L-methionine + 2 oxidized [2Fe-2S]-[ferredoxin] + S-adenosyl-L-homocysteine. In terms of biological role, specifically methylates position 2 of adenine 2503 in 23S rRNA and position 2 of adenine 37 in tRNAs. m2A2503 modification seems to play a crucial role in the proofreading step occurring at the peptidyl transferase center and thus would serve to optimize ribosomal fidelity. This is Dual-specificity RNA methyltransferase RlmN from Rhodopseudomonas palustris (strain ATCC BAA-98 / CGA009).